A 285-amino-acid chain; its full sequence is Meiotically up-regulated gene 125 protein (285 aa).

The protein localises to the cytoplasm. The protein resides in the nucleus. Its function is as follows. Has a role in meiosis. This is Meiotically up-regulated gene 125 protein (mug125) from Schizosaccharomyces pombe (strain 972 / ATCC 24843) (Fission yeast).